A 459-amino-acid chain; its full sequence is tRNA modification GTPase MnmE (459 aa).

(6S)-5-formyl-5,6,7,8-tetrahydrofolate-binding residues include Arg-23, Glu-86, and Arg-125. Residues Gly-221–Tyr-380 enclose the TrmE-type G domain. Asn-231 contributes to the K(+) binding site. GTP-binding positions include Asn-231–Ser-236, Thr-250–Thr-256, and Asp-275–Gly-278. Position 235 (Ser-235) interacts with Mg(2+). Thr-250, Ile-252, and Thr-255 together coordinate K(+). A Mg(2+)-binding site is contributed by Thr-256. Lys-459 is a (6S)-5-formyl-5,6,7,8-tetrahydrofolate binding site.

It belongs to the TRAFAC class TrmE-Era-EngA-EngB-Septin-like GTPase superfamily. TrmE GTPase family. In terms of assembly, homodimer. Heterotetramer of two MnmE and two MnmG subunits. It depends on K(+) as a cofactor.

The protein resides in the cytoplasm. Functionally, exhibits a very high intrinsic GTPase hydrolysis rate. Involved in the addition of a carboxymethylaminomethyl (cmnm) group at the wobble position (U34) of certain tRNAs, forming tRNA-cmnm(5)s(2)U34. This is tRNA modification GTPase MnmE from Clostridioides difficile (strain 630) (Peptoclostridium difficile).